The following is a 545-amino-acid chain: Purple acid phosphatase 13 (545 aa).

An N-terminal signal peptide occupies residues methionine 1 to glycine 25. 2 N-linked (GlcNAc...) asparagine glycosylation sites follow: asparagine 125 and asparagine 145. Aspartate 203 contacts Fe cation. N-linked (GlcNAc...) asparagine glycosylation is present at asparagine 209. Tyrosine 233 contributes to the Fe cation binding site. N-linked (GlcNAc...) asparagine glycans are attached at residues asparagine 240, asparagine 254, asparagine 306, asparagine 321, asparagine 351, and asparagine 367. Residue histidine 389 is the Proton donor of the active site. Histidine 416 contributes to the Zn(2+) binding site. A substrate-binding site is contributed by histidine 416–aspartate 418. N-linked (GlcNAc...) asparagine glycosylation is found at asparagine 428, asparagine 466, asparagine 475, and asparagine 510.

It belongs to the metallophosphoesterase superfamily. Purple acid phosphatase family. As to quaternary structure, homodimer. It depends on Fe cation as a cofactor. The cofactor is Zn(2+). In terms of tissue distribution, expressed in stems, leaves, flowers and siliques.

The protein localises to the secreted. The enzyme catalyses a phosphate monoester + H2O = an alcohol + phosphate. In Arabidopsis thaliana (Mouse-ear cress), this protein is Purple acid phosphatase 13 (PAP13).